The primary structure comprises 1109 residues: Receptor-like protein kinase (1109 aa).

The N-terminal stretch at 1–20 (MKVAVNTFLLFLCSTSSIYA) is a signal peptide. Topologically, residues 21–764 (AFALNSDGAA…GGLSTLGIAM (744 aa)) are extracellular. N-linked (GlcNAc...) asparagine glycans are attached at residues Asn50, Asn74, and Asn114. 6 LRR repeats span residues 69 to 92 (FVDT…SHLK), 93 to 115 (HLKK…LGNC), 117 to 140 (LLEH…GALQ), 141 to 162 (NLRN…SLLS), 165 to 187 (HLET…IGNM), and 189 to 209 (ELTT…SSLG). N-linked (GlcNAc...) asparagine glycans are attached at residues Asn144, Asn177, and Asn186. Asn210 carries N-linked (GlcNAc...) asparagine glycosylation. 20 LRR repeats span residues 213-236 (TLQE…NNLE), 237-258 (NLVY…DFVS), 261-284 (QIDT…GNCT), 309-331 (KLDT…LGKC), 333-355 (SMID…LGML), 357-378 (QLQY…SIWK), 381-404 (SLQS…TELK), 405-427 (QLVS…LGAN), 429-451 (SLEV…LCSQ), 453-476 (KLKR…GGCS), 477-499 (TLER…VEKQ), 500-523 (NLLF…GNLK), 524-546 (NVTA…LGSL), 548-569 (KLEH…ELSN), 572-595 (KLSE…GSLT), 596-618 (ELTK…LFQS), 620-642 (KLLN…GALQ), 643-666 (ALRS…GKLK), 667-689 (MLEE…STIQ), and 690-710 (SLTF…PSLT). N-linked (GlcNAc...) asparagine glycosylation is found at Asn245 and Asn282. Residues Asn367, Asn391, and Asn427 are each glycosylated (N-linked (GlcNAc...) asparagine). 4 N-linked (GlcNAc...) asparagine glycosylation sites follow: Asn510, Asn524, Asn553, and Asn584. 3 N-linked (GlcNAc...) asparagine glycosylation sites follow: Asn648, Asn677, and Asn695. The helical transmembrane segment at 765 to 785 (IVLGALLFIICLFLFSAFLFL) threads the bilayer. Topologically, residues 786-1109 (HCKKSVQEIA…YSSSVRNKSK (324 aa)) are cytoplasmic. A Protein kinase domain is found at 816–1096 (LNDKYVIGKG…DVVKQLTRWS (281 aa)). ATP is bound by residues 822–830 (IGKGAHGTI) and Lys845. Residues 827–850 (HGTIYKATLSPDKVYAVKKLVFTG) form an LRR 27 repeat. Residue Asp942 is the Proton acceptor of the active site. The stretch at 958-981 (ISDFGIAKLLDQSATSIPSNTVQG) is one LRR 28 repeat.

This sequence belongs to the protein kinase superfamily. Ser/Thr protein kinase family. In terms of tissue distribution, INRPK1 and INRPK1b are expressed in leaves, cotyledons, shoot tips and roots from induced and vegetative plants. The highest concentrations of INRPK1 are found in vegetative roots, and the lowest concentrations in vegetative cotyledons. INRPK1b is more abundant in roots than other tissues. INRPK1a is expressed in vegetative roots. INRPK1c is expressed in cotyledons.

The protein localises to the cell membrane. It is found in the secreted. The enzyme catalyses L-seryl-[protein] + ATP = O-phospho-L-seryl-[protein] + ADP + H(+). It carries out the reaction L-threonyl-[protein] + ATP = O-phospho-L-threonyl-[protein] + ADP + H(+). Its function is as follows. Possible role in short-day photoperiod floral induction. The sequence is that of Receptor-like protein kinase (INRPK1) from Ipomoea nil (Japanese morning glory).